Reading from the N-terminus, the 478-residue chain is Cysteine--tRNA ligase (478 aa).

C29 is a binding site for Zn(2+). The 'HIGH' region signature appears at 31-41 (PTVYDIPHIGN). Positions 216, 241, and 245 each coordinate Zn(2+). Residues 274–278 (KMSKS) carry the 'KMSKS' region motif. K277 provides a ligand contact to ATP.

The protein belongs to the class-I aminoacyl-tRNA synthetase family. Monomer. Zn(2+) serves as cofactor.

It is found in the cytoplasm. It catalyses the reaction tRNA(Cys) + L-cysteine + ATP = L-cysteinyl-tRNA(Cys) + AMP + diphosphate. This is Cysteine--tRNA ligase from Orientia tsutsugamushi (strain Ikeda) (Rickettsia tsutsugamushi).